Consider the following 199-residue polypeptide: MLLSDRDIRAEIAAGRLGVEPLLENLIQPSSIDVRLDRMFRVFDNSRYTHIDPAQRQDELTSLVEPGEGEPFVLHPGEFVLGSTLEVCTLPDDLAGRLEGKSSLGRLGLLTHSTAGFIDPGFSGHITLELSNVANLPITLWPGMKIGQLCLFRLSSPAEHPYGSAAAGSKYQGQRGPTPSRSYLNFPLPSDAVDAVESR.

Residues 101 to 106, Asp-119, 127 to 129, Gln-148, Tyr-162, and Gln-174 contribute to the dCTP site; these read KSSLGR and TLE. Glu-129 (proton donor/acceptor) is an active-site residue. A disordered region spans residues 163-199; it reads GSAAAGSKYQGQRGPTPSRSYLNFPLPSDAVDAVESR. Polar residues predominate over residues 171-183; it reads YQGQRGPTPSRSY.

This sequence belongs to the dCTP deaminase family. As to quaternary structure, homotrimer.

The enzyme catalyses dCTP + 2 H2O = dUMP + NH4(+) + diphosphate. The protein operates within pyrimidine metabolism; dUMP biosynthesis; dUMP from dCTP: step 1/1. In terms of biological role, bifunctional enzyme that catalyzes both the deamination of dCTP to dUTP and the hydrolysis of dUTP to dUMP without releasing the toxic dUTP intermediate. In Nocardia farcinica (strain IFM 10152), this protein is dCTP deaminase, dUMP-forming.